The sequence spans 121 residues: Basic phospholipase A2 daboxin P (121 aa).

7 disulfide bridges follow: cysteine 26-cysteine 115, cysteine 28-cysteine 44, cysteine 43-cysteine 95, cysteine 49-cysteine 121, cysteine 50-cysteine 88, cysteine 57-cysteine 81, and cysteine 75-cysteine 86. Positions 27, 29, and 31 each coordinate Ca(2+). Residue histidine 47 is part of the active site. Aspartate 48 is a Ca(2+) binding site. Aspartate 89 is an active-site residue.

Requires Ca(2+) as cofactor. Expressed by the venom gland.

It is found in the secreted. It carries out the reaction a 1,2-diacyl-sn-glycero-3-phosphocholine + H2O = a 1-acyl-sn-glycero-3-phosphocholine + a fatty acid + H(+). Functionally, snake venom phospholipase A2 (PLA2) that exhibits anticoagulant activity, probably by binding to factor X and its activated form factor Xa (F10). Shows no cytotoxicity. PLA2 catalyzes the calcium-dependent hydrolysis of the 2-acyl groups in 3-sn-phosphoglycerides. The protein is Basic phospholipase A2 daboxin P of Daboia russelii (Russel's viper).